The primary structure comprises 198 residues: uncharacterized protein (198 aa).

Residues Gly40 to Pro111 are disordered. Positions Ser60–Arg74 are enriched in low complexity.

This is an uncharacterized protein from Homo sapiens (Human).